Here is a 587-residue protein sequence, read N- to C-terminus: Phosphomethylpyrimidine synthase (587 aa).

Residues 1 to 58 (MTPTQNEIHPKHSYSPIRKDGLEVPETEIRLDDSPSGPNEPFRIYRTRGPETNPKQGL) form a disordered region. Positions 17-33 (IRKDGLEVPETEIRLDD) are enriched in basic and acidic residues. Substrate-binding positions include asparagine 180, methionine 209, tyrosine 238, histidine 274, 294–296 (SRG), 335–338 (DGLR), and glutamate 374. Histidine 378 is a binding site for Zn(2+). Tyrosine 401 provides a ligand contact to substrate. Histidine 442 lines the Zn(2+) pocket. Positions 522, 525, and 530 each coordinate [4Fe-4S] cluster.

The protein belongs to the ThiC family. Requires [4Fe-4S] cluster as cofactor.

The enzyme catalyses 5-amino-1-(5-phospho-beta-D-ribosyl)imidazole + S-adenosyl-L-methionine = 4-amino-2-methyl-5-(phosphooxymethyl)pyrimidine + CO + 5'-deoxyadenosine + formate + L-methionine + 3 H(+). It participates in cofactor biosynthesis; thiamine diphosphate biosynthesis. Catalyzes the synthesis of the hydroxymethylpyrimidine phosphate (HMP-P) moiety of thiamine from aminoimidazole ribotide (AIR) in a radical S-adenosyl-L-methionine (SAM)-dependent reaction. This is Phosphomethylpyrimidine synthase from Corynebacterium glutamicum (strain ATCC 13032 / DSM 20300 / JCM 1318 / BCRC 11384 / CCUG 27702 / LMG 3730 / NBRC 12168 / NCIMB 10025 / NRRL B-2784 / 534).